The primary structure comprises 416 residues: Probable glucan 1,3-beta-glucosidase A (416 aa).

Residues 1 to 22 form the signal peptide; the sequence is MIFKFSQKALVALCLVVGLAEA. Residue E211 is the Proton donor of the active site. Cystine bridges form between C291–C415 and C316–C342. The active-site Nucleophile is the E308.

The protein belongs to the glycosyl hydrolase 5 (cellulase A) family. As to quaternary structure, monomer. Requires Mn(2+) as cofactor.

The protein localises to the secreted. It catalyses the reaction Successive hydrolysis of beta-D-glucose units from the non-reducing ends of (1-&gt;3)-beta-D-glucans, releasing alpha-glucose.. In terms of biological role, beta-glucanases participate in the metabolism of beta-glucan, the main structural component of the cell wall. It could also function biosynthetically as a transglycosylase. In Neosartorya fischeri (strain ATCC 1020 / DSM 3700 / CBS 544.65 / FGSC A1164 / JCM 1740 / NRRL 181 / WB 181) (Aspergillus fischerianus), this protein is Probable glucan 1,3-beta-glucosidase A (exgA).